We begin with the raw amino-acid sequence, 451 residues long: uncharacterized protein (451 aa).

Mn(2+) contacts are provided by D305, D316, H384, E414, and E428.

This sequence belongs to the peptidase M24B family. Requires Mn(2+) as cofactor.

This is an uncharacterized protein from Schizosaccharomyces pombe (strain 972 / ATCC 24843) (Fission yeast).